The chain runs to 307 residues: 4-hydroxy-3-methylbut-2-enyl diphosphate reductase (307 aa).

Residue Cys-13 coordinates [4Fe-4S] cluster. 2 residues coordinate (2E)-4-hydroxy-3-methylbut-2-enyl diphosphate: His-42 and His-75. The dimethylallyl diphosphate site is built by His-42 and His-75. His-42 and His-75 together coordinate isopentenyl diphosphate. Residue Cys-97 coordinates [4Fe-4S] cluster. Residue His-125 participates in (2E)-4-hydroxy-3-methylbut-2-enyl diphosphate binding. His-125 is a dimethylallyl diphosphate binding site. Isopentenyl diphosphate is bound at residue His-125. The active-site Proton donor is the Glu-127. A (2E)-4-hydroxy-3-methylbut-2-enyl diphosphate-binding site is contributed by Thr-165. Cys-195 contributes to the [4Fe-4S] cluster binding site. (2E)-4-hydroxy-3-methylbut-2-enyl diphosphate contacts are provided by Ser-223, Ser-224, Asn-225, and Ser-267. Residues Ser-223, Ser-224, Asn-225, and Ser-267 each coordinate dimethylallyl diphosphate. Positions 223, 224, 225, and 267 each coordinate isopentenyl diphosphate.

The protein belongs to the IspH family. [4Fe-4S] cluster is required as a cofactor.

The enzyme catalyses isopentenyl diphosphate + 2 oxidized [2Fe-2S]-[ferredoxin] + H2O = (2E)-4-hydroxy-3-methylbut-2-enyl diphosphate + 2 reduced [2Fe-2S]-[ferredoxin] + 2 H(+). The catalysed reaction is dimethylallyl diphosphate + 2 oxidized [2Fe-2S]-[ferredoxin] + H2O = (2E)-4-hydroxy-3-methylbut-2-enyl diphosphate + 2 reduced [2Fe-2S]-[ferredoxin] + 2 H(+). It participates in isoprenoid biosynthesis; dimethylallyl diphosphate biosynthesis; dimethylallyl diphosphate from (2E)-4-hydroxy-3-methylbutenyl diphosphate: step 1/1. The protein operates within isoprenoid biosynthesis; isopentenyl diphosphate biosynthesis via DXP pathway; isopentenyl diphosphate from 1-deoxy-D-xylulose 5-phosphate: step 6/6. Catalyzes the conversion of 1-hydroxy-2-methyl-2-(E)-butenyl 4-diphosphate (HMBPP) into a mixture of isopentenyl diphosphate (IPP) and dimethylallyl diphosphate (DMAPP). Acts in the terminal step of the DOXP/MEP pathway for isoprenoid precursor biosynthesis. The polypeptide is 4-hydroxy-3-methylbut-2-enyl diphosphate reductase (Chlamydia trachomatis serovar L2b (strain UCH-1/proctitis)).